A 183-amino-acid chain; its full sequence is uncharacterized protein (183 aa).

The Macro domain occupies 1–182; it reads MIKVVKGDIT…KALKIVGQGG (182 aa).

This is an uncharacterized protein from Pyrococcus furiosus (strain ATCC 43587 / DSM 3638 / JCM 8422 / Vc1).